The primary structure comprises 500 residues: ATP synthase subunit alpha (500 aa).

169 to 176 serves as a coordination point for ATP; it reads GDRQTGKT.

This sequence belongs to the ATPase alpha/beta chains family. In terms of assembly, F-type ATPases have 2 components, CF(1) - the catalytic core - and CF(0) - the membrane proton channel. CF(1) has five subunits: alpha(3), beta(3), gamma(1), delta(1), epsilon(1). CF(0) has three main subunits: a(1), b(2) and c(9-12). The alpha and beta chains form an alternating ring which encloses part of the gamma chain. CF(1) is attached to CF(0) by a central stalk formed by the gamma and epsilon chains, while a peripheral stalk is formed by the delta and b chains.

The protein localises to the cell membrane. It catalyses the reaction ATP + H2O + 4 H(+)(in) = ADP + phosphate + 5 H(+)(out). Functionally, produces ATP from ADP in the presence of a proton gradient across the membrane. The alpha chain is a regulatory subunit. The protein is ATP synthase subunit alpha of Lactococcus lactis subsp. cremoris (strain MG1363).